An 87-amino-acid chain; its full sequence is Acyl-CoA-binding protein (87 aa).

Position 2 is an N-acetylserine (Ser2). An ACB domain is found at 2–87 (SQAEFDKAAE…VEELKKKYGI (86 aa)). Lys8 carries the post-translational modification N6-acetyllysine; alternate. Lys8 is modified (N6-succinyllysine; alternate). Position 14 (Lys14) interacts with an acyl-CoA. Lys17 carries the N6-succinyllysine modification. An N6-acetyllysine modification is found at Lys19. At Tyr29 the chain carries Phosphotyrosine. Residues 29–33 (YSHYK), Lys51, Lys55, and Tyr74 each bind an acyl-CoA. The residue at position 51 (Lys51) is an N6-acetyllysine. At Lys55 the chain carries N6-acetyllysine; alternate. Lys55 bears the N6-succinyllysine; alternate mark. Lys55 carries the post-translational modification N6-(2-hydroxyisobutyryl)lysine; alternate. Lys55 bears the N6-malonyllysine; alternate mark. Lys77 is subject to N6-acetyllysine; alternate. Lys77 is modified (N6-succinyllysine; alternate).

It belongs to the ACBP family. In terms of assembly, monomer.

Its subcellular location is the endoplasmic reticulum. The protein resides in the golgi apparatus. Binds medium- and long-chain acyl-CoA esters with very high affinity and may function as an intracellular carrier of acyl-CoA esters. The protein is Acyl-CoA-binding protein (DBI) of Chaetophractus villosus (South American armadillo).